The chain runs to 782 residues: Nezukol synthase KSL3 (782 aa).

Aspartate 529, aspartate 533, asparagine 677, and glutamate 685 together coordinate Mg(2+). The short motif at 529–533 (DDVFD) is the DDXXD motif element.

Belongs to the terpene synthase family. Mg(2+) serves as cofactor. In terms of tissue distribution, highly expressed in leaves, and, at low levels, in stems, but barely in roots and flowers.

It catalyses the reaction (+)-copalyl diphosphate = miltiradiene + diphosphate. It carries out the reaction (+)-copalyl diphosphate + H2O = nezukol + diphosphate. It participates in secondary metabolite biosynthesis; terpenoid biosynthesis. In terms of biological role, involved in the biosynthesis of ent-kaurene diterpenoids natural products such as oridonin, miltiradiene, eriocalyxin B and nezukol, known to exhibit antitumor, anti-inflammatory and antibacterial activities. Catalyzes the conversion of (+)-copalyl diphosphate ((+)-CPP) to nezukol and miltiradiene. The reaction mechanism proceeds via the ionization of the diphosphate group of (+)-CPP, followed by formation of an intermediary pimar-15-en-8-yl(+) carbocation and neutralization of the carbocation by water capture at C-8 to yield nezukol. Can interact with ent-copalyl diphosphate (ent-CPP) but seems unable to use it as substrate. This chain is Nezukol synthase KSL3, found in Isodon rubescens (Rabdosia rubescens).